Here is a 434-residue protein sequence, read N- to C-terminus: Probable tRNA pseudouridine synthase D (434 aa).

The active-site Nucleophile is Asp93. In terms of domain architecture, TRUD spans 169–396; the sequence is GTPNYFGQQR…SAGSRRAILL (228 aa).

This sequence belongs to the pseudouridine synthase TruD family.

The enzyme catalyses uridine(13) in tRNA = pseudouridine(13) in tRNA. Could be responsible for synthesis of pseudouridine from uracil-13 in transfer RNAs. This is Probable tRNA pseudouridine synthase D from Halobacterium salinarum (strain ATCC 29341 / DSM 671 / R1).